A 363-amino-acid chain; its full sequence is MGEVKLEDIFEILDNYDKDNITIATLGSHTSLHILQGAKEEGFRTAIVCEKGREVPYQRFDVADEYIIVDKFKDIVNEDVQQKLRDMNAIVIPHGSFVAYAGLDNVEDKFNVPMFGNRDILRWEAERDKERALLVEGEVRIPYKYDNPSEIDRPVMVKFPGARGGRGYFVASSPEEFNKKIDAMKARGWLEDSDVANAHIEEYVSGCNYCIHYFYSALEDEVELLGMDTRYESSIDGFVRMPAKDQLDIDLSPSYVVTGNHPAVIRESLLPQVFEMADKLVESAKKLVAPGLNGPFCMQTLVNDNLEVICFEISARTDGGTNTFMGGSPYSYLTYGKPMSMGRRIALEIKNAIKKEELEKIIT.

Residues His29 and Ser96 each contribute to the 5-amino-1-(5-phospho-beta-D-ribosyl)imidazole-4-carboxamide site. An ATP-grasp domain is found at 118–354 (RDILRWEAER…IALEIKNAIK (237 aa)). Residues 148 to 210 (PSEI…CNYC) and Glu232 each bind ATP. Asn260 lines the 5-amino-1-(5-phospho-beta-D-ribosyl)imidazole-4-carboxamide pocket. Residues Gln299 and Glu312 each contribute to the Mg(2+) site.

This sequence belongs to the phosphohexose mutase family. Mg(2+) serves as cofactor. Mn(2+) is required as a cofactor.

The enzyme catalyses 5-amino-1-(5-phospho-beta-D-ribosyl)imidazole-4-carboxamide + formate + ATP = 5-formamido-1-(5-phospho-D-ribosyl)imidazole-4-carboxamide + ADP + phosphate. It functions in the pathway purine metabolism; IMP biosynthesis via de novo pathway; 5-formamido-1-(5-phospho-D-ribosyl)imidazole-4-carboxamide from 5-amino-1-(5-phospho-D-ribosyl)imidazole-4-carboxamide (formate route): step 1/1. Catalyzes the ATP- and formate-dependent formylation of 5-aminoimidazole-4-carboxamide-1-beta-d-ribofuranosyl 5'-monophosphate (AICAR) to 5-formaminoimidazole-4-carboxamide-1-beta-d-ribofuranosyl 5'-monophosphate (FAICAR) in the absence of folates. The sequence is that of 5-formaminoimidazole-4-carboxamide-1-(beta)-D-ribofuranosyl 5'-monophosphate synthetase from Methanobrevibacter smithii (strain ATCC 35061 / DSM 861 / OCM 144 / PS).